The following is a 210-amino-acid chain: Probable GTP-binding protein EngB (210 aa).

One can recognise an EngB-type G domain in the interval 25-199 (CGIEVAFAGR…RQKLDSWFSE (175 aa)). GTP contacts are provided by residues 33-40 (GRSNAGKS), 60-64 (GRTQL), 78-81 (DLPG), 145-148 (TKAD), and 178-180 (FSS). 2 residues coordinate Mg(2+): serine 40 and threonine 62.

It belongs to the TRAFAC class TrmE-Era-EngA-EngB-Septin-like GTPase superfamily. EngB GTPase family. Mg(2+) serves as cofactor.

Its function is as follows. Necessary for normal cell division and for the maintenance of normal septation. The chain is Probable GTP-binding protein EngB from Salmonella agona (strain SL483).